A 65-amino-acid polypeptide reads, in one-letter code: DNA-directed RNA polymerase subunit Rpo10 (65 aa).

Zn(2+) is bound by residues cysteine 7, cysteine 10, cysteine 44, and cysteine 45.

This sequence belongs to the archaeal Rpo10/eukaryotic RPB10 RNA polymerase subunit family. In terms of assembly, part of the RNA polymerase complex. Zn(2+) is required as a cofactor.

The protein localises to the cytoplasm. The enzyme catalyses RNA(n) + a ribonucleoside 5'-triphosphate = RNA(n+1) + diphosphate. Functionally, DNA-dependent RNA polymerase (RNAP) catalyzes the transcription of DNA into RNA using the four ribonucleoside triphosphates as substrates. The sequence is that of DNA-directed RNA polymerase subunit Rpo10 from Thermococcus onnurineus (strain NA1).